A 376-amino-acid polypeptide reads, in one-letter code: Succinyl-diaminopimelate desuccinylase (376 aa).

His-67 contacts Zn(2+). Asp-69 is a catalytic residue. Asp-100 lines the Zn(2+) pocket. The active-site Proton acceptor is Glu-134. Glu-135, Glu-163, and His-349 together coordinate Zn(2+).

The protein belongs to the peptidase M20A family. DapE subfamily. In terms of assembly, homodimer. The cofactor is Zn(2+). Co(2+) is required as a cofactor.

The enzyme catalyses N-succinyl-(2S,6S)-2,6-diaminopimelate + H2O = (2S,6S)-2,6-diaminopimelate + succinate. It functions in the pathway amino-acid biosynthesis; L-lysine biosynthesis via DAP pathway; LL-2,6-diaminopimelate from (S)-tetrahydrodipicolinate (succinylase route): step 3/3. Functionally, catalyzes the hydrolysis of N-succinyl-L,L-diaminopimelic acid (SDAP), forming succinate and LL-2,6-diaminopimelate (DAP), an intermediate involved in the bacterial biosynthesis of lysine and meso-diaminopimelic acid, an essential component of bacterial cell walls. This chain is Succinyl-diaminopimelate desuccinylase, found in Idiomarina loihiensis (strain ATCC BAA-735 / DSM 15497 / L2-TR).